The following is a 108-amino-acid chain: Thioredoxin (108 aa).

The 107-residue stretch at 2–108 folds into the Thioredoxin domain; that stretch reads SEHIVNVTDA…QLAAFLDANI (107 aa). A disulfide bridge links Cys33 with Cys36.

Belongs to the thioredoxin family.

Functionally, participates in various redox reactions through the reversible oxidation of its active center dithiol to a disulfide and catalyzes dithiol-disulfide exchange reactions. The sequence is that of Thioredoxin (trxA) from Pseudomonas aeruginosa (strain ATCC 15692 / DSM 22644 / CIP 104116 / JCM 14847 / LMG 12228 / 1C / PRS 101 / PAO1).